The sequence spans 555 residues: Solute carrier family 22 member 2 (555 aa).

At 1–21 (MPTTVDDVLEHGGEFHFFQKQ) the chain is on the cytoplasmic side. Residues 22 to 42 (MFFLLALLSATFTPIYVGIVF) form a helical membrane-spanning segment. The Extracellular segment spans residues 43 to 150 (LGFTPDHRCR…LVCANSWMLD (108 aa)). Asparagine 72 carries N-linked (GlcNAc...) asparagine glycosylation. Residues 151–171 (LFQASVNVGFFFGSVSIGYIA) traverse the membrane as a helical segment. The Cytoplasmic portion of the chain corresponds to 172 to 177 (DRFGRK). Residues 178–198 (LCLLTTVLINAAAGVLMAISP) form a helical membrane-spanning segment. Over 199-210 (TYTWMLIFRLIQ) the chain is Extracellular. A helical transmembrane segment spans residues 211–231 (GLVSKAGWLIGYILITEFVGR). Over 232-238 (RYRRTVG) the chain is Cytoplasmic. A helical transmembrane segment spans residues 239 to 259 (IFYQVAYTVGLLVLAGVAYAL). At 260-263 (PHWR) the chain is on the extracellular side. A helical membrane pass occupies residues 264-284 (WLQFTVTLPNFFFLLYYWCIP). A Proline-rich sequence motif is present at residues 284–288 (PESPR). Topologically, residues 285 to 348 (ESPRWLISQN…VRTPQIRKHT (64 aa)) are cytoplasmic. The helical transmembrane segment at 349 to 369 (MILMYNWFTSSVLYQGLIMHM) threads the bilayer. The Extracellular segment spans residues 370–375 (GLAGDN). A helical transmembrane segment spans residues 376–396 (IYLDFFYSALVEFPAAFMIIV). Over 397 to 404 (TIDRIGRR) the chain is Cytoplasmic. Residues 405-425 (YPWAASNMVAGAACLASVFIP) traverse the membrane as a helical segment. The Extracellular portion of the chain corresponds to 426–432 (GDLQWLK). The chain crosses the membrane as a helical span at residues 433 to 453 (IIISCLGRMGITMAYEIVRLV). Topologically, residues 454 to 464 (NAELYPTFIRN) are cytoplasmic. Residues 465 to 485 (LGVHICSSMCDIGGIITPFLV) form a helical membrane-spanning segment. Residues 486–494 (YRLTNIWLE) are Extracellular-facing. Residues 495–515 (LPLMVFGVLGLVAGGLVLLLP) form a helical membrane-spanning segment. The Cytoplasmic portion of the chain corresponds to 516–555 (ETKGKALPETIEEAENMQRPRKNKEKMIYLQVQKLDIPLN).

It belongs to the major facilitator (TC 2.A.1) superfamily. Organic cation transporter (TC 2.A.1.19) family. In terms of processing, tyrosine phosphorylated.

It localises to the basolateral cell membrane. Its subcellular location is the basal cell membrane. It is found in the apical cell membrane. It catalyses the reaction (R)-noradrenaline(out) = (R)-noradrenaline(in). It carries out the reaction (R)-adrenaline(out) = (R)-adrenaline(in). The enzyme catalyses serotonin(out) = serotonin(in). The catalysed reaction is dopamine(out) = dopamine(in). It catalyses the reaction histamine(out) = histamine(in). It carries out the reaction thiamine(in) = thiamine(out). The enzyme catalyses creatinine(in) = creatinine(out). The catalysed reaction is 1-methylnicotinamide(out) = 1-methylnicotinamide(in). It catalyses the reaction guanidine(out) = guanidine(in). It carries out the reaction choline(out) = choline(in). The enzyme catalyses agmatine(out) = agmatine(in). The catalysed reaction is putrescine(out) = putrescine(in). It catalyses the reaction spermidine(in) = spermidine(out). It carries out the reaction tyramine(in) = tyramine(out). The enzyme catalyses L-histidyl-L-proline diketopiperazine(in) = L-histidyl-L-proline diketopiperazine(out). The catalysed reaction is (R)-salsolinol(in) = (R)-salsolinol(out). It catalyses the reaction N-methyl-(R)-salsolinol(in) = N-methyl-(R)-salsolinol(out). It carries out the reaction acetylcholine(in) = acetylcholine(out). The enzyme catalyses prostaglandin F2alpha(out) = prostaglandin F2alpha(in). The catalysed reaction is prostaglandin E2(out) = prostaglandin E2(in). With respect to regulation, tyrosine phosphorylation of the transporter leads to activation of the transport activity. Inhibited by cGMP, most likely through a cGMP-binding protein that interacts with OCT2. Functionally, electrogenic voltage-dependent transporter that mediates the transport of a variety of organic cations such as endogenous bioactive amines, cationic drugs and xenobiotics. Functions as a Na(+)-independent, bidirectional uniporter. Cation cellular uptake or release is driven by the electrochemical potential, i.e. membrane potential and concentration gradient. However, may also engage electroneutral cation exchange when saturating concentrations of cation substrates are reached. Predominantly expressed at the basolateral membrane of hepatocytes and proximal tubules and involved in the uptake and disposition of cationic compounds by hepatic and renal clearance from the blood flow. Implicated in monoamine neurotransmitters uptake such as histamine, dopamine, adrenaline/epinephrine, noradrenaline/norepinephrine, serotonin and tyramine, thereby supporting a physiological role in the central nervous system by regulating interstitial concentrations of neurotransmitters. Also capable of transporting dopaminergic neuromodulators cyclo(his-pro), salsolinol and N-methyl-salsolinol, thereby involved in the maintenance of dopaminergic cell integrity in the central nervous system. Mediates the bidirectional transport of acetylcholine (ACh) at the apical membrane of ciliated cell in airway epithelium, thereby playing a role in luminal release of ACh from bronchial epithelium. Also transports guanidine and endogenous monoamines such as vitamin B1/thiamine, creatinine and N-1-methylnicotinamide (NMN). Mediates the uptake and efflux of quaternary ammonium compound choline. Mediates the bidirectional transport of polyamine agmatine and the uptake of polyamines putrescine and spermidine. Able to transport non-amine endogenous compounds such as prostaglandin E2 (PGE2) and prostaglandin F2-alpha (PGF2-alpha). Also involved in the uptake of xenobiotic 4-(4-(dimethylamino)styryl)-N-methylpyridinium (ASP). May contribute to regulate the transport of organic compounds in testis across the blood-testis-barrier. The chain is Solute carrier family 22 member 2 (SLC22A2) from Pongo abelii (Sumatran orangutan).